Consider the following 209-residue polypeptide: CASP-like protein 2A1 (209 aa).

Over 1 to 38 (MSKMAEEKVLAAPATVDGGMQSSGDLQASSAAAARVRP) the chain is Cytoplasmic. The helical transmembrane segment at 39-59 (VETLLRAAPLGLCVAAMAIML) threads the bilayer. Residues 60–80 (RNSVTNEYGTVSYSDLGGFKY) are Extracellular-facing. The chain crosses the membrane as a helical span at residues 81–101 (LVYANGLCAAYSLASAFYIAV). Residues 102-109 (PRPATLSR) lie on the Cytoplasmic side of the membrane. Residues 110-130 (SWVVFLLDQVFTYLILAAGAA) form a helical membrane-spanning segment. Residues 131 to 163 (SAELLYLAYNGDKEVTWSEACGVFGGFCRQART) lie on the Extracellular side of the membrane. A helical transmembrane segment spans residues 164–184 (SVAITFASVACYILLSLISSY). Residues 185–209 (RLFSAYDPPQPSLGNKGVEIAAFPR) are Cytoplasmic-facing.

This sequence belongs to the Casparian strip membrane proteins (CASP) family. In terms of assembly, homodimer and heterodimers.

It localises to the cell membrane. The sequence is that of CASP-like protein 2A1 from Oryza sativa subsp. indica (Rice).